Consider the following 567-residue polypeptide: Proline--tRNA ligase (567 aa).

Belongs to the class-II aminoacyl-tRNA synthetase family. ProS type 1 subfamily. Homodimer.

Its subcellular location is the cytoplasm. The catalysed reaction is tRNA(Pro) + L-proline + ATP = L-prolyl-tRNA(Pro) + AMP + diphosphate. Functionally, catalyzes the attachment of proline to tRNA(Pro) in a two-step reaction: proline is first activated by ATP to form Pro-AMP and then transferred to the acceptor end of tRNA(Pro). As ProRS can inadvertently accommodate and process non-cognate amino acids such as alanine and cysteine, to avoid such errors it has two additional distinct editing activities against alanine. One activity is designated as 'pretransfer' editing and involves the tRNA(Pro)-independent hydrolysis of activated Ala-AMP. The other activity is designated 'posttransfer' editing and involves deacylation of mischarged Ala-tRNA(Pro). The misacylated Cys-tRNA(Pro) is not edited by ProRS. This is Proline--tRNA ligase from Stenotrophomonas maltophilia (strain K279a).